The primary structure comprises 239 residues: Uridylate kinase (239 aa).

ATP is bound at residue 13–16; it reads KISG. A UMP-binding site is contributed by G55. ATP contacts are provided by G56 and R60. UMP contacts are provided by residues D75 and 136–143; that span reads LGIPFFTT. Residues T163, Y169, and D172 each coordinate ATP.

It belongs to the UMP kinase family. In terms of assembly, homohexamer.

The protein localises to the cytoplasm. The enzyme catalyses UMP + ATP = UDP + ADP. The protein operates within pyrimidine metabolism; CTP biosynthesis via de novo pathway; UDP from UMP (UMPK route): step 1/1. With respect to regulation, inhibited by UTP. Catalyzes the reversible phosphorylation of UMP to UDP. The chain is Uridylate kinase from Buchnera aphidicola subsp. Cinara cedri (strain Cc).